A 483-amino-acid polypeptide reads, in one-letter code: Chromatin structure-remodeling complex protein RSC6 (483 aa).

Disordered stretches follow at residues 142–183 and 273–309; these read KRKR…EAES and AQDG…DKPE. Residues 148–158 are compositionally biased toward low complexity; sequence SLSLPLNLQQP. Over residues 171–180 the composition is skewed to acidic residues; the sequence is DNGEDEDSAE.

It to yeast SNF12. In terms of assembly, interacts directly with RSC8. Component of the two forms of the RSC complex composed of at least either RSC1 or RSC2, and ARP7, ARP9, LDB7, NPL6, RSC3, RSC30, RSC4, RSC58, RSC6, RSC8, RSC9, SFH1, STH1, HTL1 and probably RTT102. The complexes interact with histone and histone variant components of centromeric chromatin.

Its subcellular location is the nucleus. In terms of biological role, component of the chromatin structure-remodeling complex (RSC), which is involved in transcription regulation and nucleosome positioning. RSC is responsible for the transfer of a histone octamer from a nucleosome core particle to naked DNA. The reaction requires ATP and involves an activated RSC-nucleosome intermediate. Remodeling reaction also involves DNA translocation, DNA twist and conformational change. As a reconfigurer of centromeric and flanking nucleosomes, RSC complex is required both for proper kinetochore function in chromosome segregation and, via a PKC1-dependent signaling pathway, for organization of the cellular cytoskeleton. This subunit is essential for mitotic growth and suppresses formamide sensitivity of the RSC8 mutants. The polypeptide is Chromatin structure-remodeling complex protein RSC6 (RSC6) (Saccharomyces cerevisiae (strain ATCC 204508 / S288c) (Baker's yeast)).